A 307-amino-acid polypeptide reads, in one-letter code: Nicotinamide/nicotinic acid mononucleotide adenylyltransferase 2 (307 aa).

2 residues coordinate NAD(+): S16 and F17. H24 is a binding site for ATP. 2 residues coordinate NAD(+): W92 and T95. Residues C164 and C165 are each lipidated (S-palmitoyl cysteine). NAD(+) is bound by residues G200, D202, L212, W213, and R232. 271–274 (TKSR) is an ATP binding site.

Belongs to the eukaryotic NMN adenylyltransferase family. In terms of assembly, monomer. Requires Mg(2+) as cofactor. Degraded in response to injured neurite. Degradation is caused by polyubiquitination by MYCBP2 after recognition by FBXO45. In terms of processing, palmitoylated; palmitoylation is required for membrane association. As to expression, expressed predominantly in the brain and nervous system.

The protein localises to the golgi apparatus membrane. It is found in the cytoplasmic vesicle membrane. Its subcellular location is the cytoplasm. It localises to the cell projection. The protein resides in the axon. The enzyme catalyses beta-nicotinamide D-ribonucleotide + ATP + H(+) = diphosphate + NAD(+). It catalyses the reaction nicotinate beta-D-ribonucleotide + ATP + H(+) = deamido-NAD(+) + diphosphate. Its pathway is cofactor biosynthesis; NAD(+) biosynthesis; NAD(+) from nicotinamide D-ribonucleotide: step 1/1. The protein operates within cofactor biosynthesis; NAD(+) biosynthesis; deamido-NAD(+) from nicotinate D-ribonucleotide: step 1/1. With respect to regulation, inhibited by P1-(adenosine-5')-P3-(nicotinamide-riboside-5')-triphosphate (Np3AD) and P1-(adenosine-5')-P4-(nicotinamide-riboside-5')-tetraphosphate (Np4AD). Nicotinamide/nicotinate-nucleotide adenylyltransferase that acts as an axon maintenance factor. Axon survival factor required for the maintenance of healthy axons: acts by delaying Wallerian axon degeneration, an evolutionarily conserved process that drives the loss of damaged axons. Catalyzes the formation of NAD(+) from nicotinamide mononucleotide (NMN) and ATP. Can also use the deamidated form; nicotinic acid mononucleotide (NaMN) as substrate but with a lower efficiency. Cannot use triazofurin monophosphate (TrMP) as substrate. Also catalyzes the reverse reaction, i.e. the pyrophosphorolytic cleavage of NAD(+). For the pyrophosphorolytic activity prefers NAD(+), NADH and NaAD as substrates and degrades nicotinic acid adenine dinucleotide phosphate (NHD) less effectively. Fails to cleave phosphorylated dinucleotides NADP(+), NADPH and NaADP(+). Also acts as an activator of ADP-ribosylation by supporting the catalytic activity of PARP16 and promoting mono-ADP-ribosylation of ribosomes by PARP16. May be involved in the maintenance of axonal integrity. The chain is Nicotinamide/nicotinic acid mononucleotide adenylyltransferase 2 from Mus musculus (Mouse).